Consider the following 170-residue polypeptide: Putative beta-eliminating lyase-like protein (170 aa).

Lys32 bears the N6-(pyridoxal phosphate)lysine mark.

The protein belongs to the beta-eliminating lyase family. Requires pyridoxal 5'-phosphate as cofactor.

This chain is Putative beta-eliminating lyase-like protein, found in Dictyostelium discoideum (Social amoeba).